The chain runs to 138 residues: ATP synthase epsilon chain (138 aa).

It belongs to the ATPase epsilon chain family. In terms of assembly, F-type ATPases have 2 components, CF(1) - the catalytic core - and CF(0) - the membrane proton channel. CF(1) has five subunits: alpha(3), beta(3), gamma(1), delta(1), epsilon(1). CF(0) has three main subunits: a, b and c.

It is found in the cell membrane. Its function is as follows. Produces ATP from ADP in the presence of a proton gradient across the membrane. The polypeptide is ATP synthase epsilon chain (atpC) (Buchnera aphidicola subsp. Acyrthosiphon pisum (strain APS) (Acyrthosiphon pisum symbiotic bacterium)).